Reading from the N-terminus, the 1388-residue chain is Retrotransposon Gag-like protein 9 (1388 aa).

Disordered stretches follow at residues 491-511 (ATAS…GAMS), 769-790 (TPLM…ASSS), 895-918 (GGVS…RRPS), 1100-1138 (TDSG…PKEV), and 1336-1388 (AMGN…HTNK). The span at 1103–1123 (GEASTSHINITASGSKPTSHM) shows a compositional bias: polar residues. Basic and acidic residues predominate over residues 1359-1374 (YLKEHGDPQEGLHDHL).

The sequence is that of Retrotransposon Gag-like protein 9 from Homo sapiens (Human).